Reading from the N-terminus, the 679-residue chain is NADPH--cytochrome P450 reductase (679 aa).

The Lumenal segment spans residues 1–21 (MASEQTIDGAAAIPSGGGDEP). Residues 22-42 (FLGLLDVALLAVLIGGAAFYF) traverse the membrane as a helical segment. Over 43–679 (LRSRKKEEEP…QKRYSADVWS (637 aa)) the chain is Cytoplasmic. Residues 84–228 (LVVFYGSQTG…DFITWKDRFW (145 aa)) enclose the Flavodoxin-like domain. Residues 90-95 (SQTGTG), 142-145 (ATYG), 177-186 (LGNKTYEHYN), and D212 contribute to the FMN site. The region spanning 283–523 (KNPFLAPIKV…FIRKSQFRLP (241 aa)) is the FAD-binding FR-type domain. R302 contacts NADP(+). FAD is bound by residues 458-461 (RYYS), 476-478 (TAV), Y482, and 492-495 (GVAT). Residues T537, 597-598 (SR), 603-607 (KVYVQ), and D640 contribute to the NADP(+) site. W678 lines the FAD pocket.

Belongs to the NADPH--cytochrome P450 reductase family. The protein in the N-terminal section; belongs to the flavodoxin family. This sequence in the C-terminal section; belongs to the flavoprotein pyridine nucleotide cytochrome reductase family. As to quaternary structure, interacts with sturkopf. FAD is required as a cofactor. Requires FMN as cofactor. High in antennae.

Its subcellular location is the endoplasmic reticulum membrane. The catalysed reaction is 2 oxidized [cytochrome P450] + NADPH = 2 reduced [cytochrome P450] + NADP(+) + H(+). Functionally, this enzyme is required for electron transfer from NADP to cytochrome p450 in microsomes. It can also provide electron transfer to heme oxygenase and cytochrome b5. May function to clear the olfactory organ (antennae) from accumulating chemicals. This is NADPH--cytochrome P450 reductase (Cpr) from Drosophila melanogaster (Fruit fly).